The sequence spans 213 residues: Kynurenine formamidase (213 aa).

Substrate is bound at residue Trp18. Residues His48, His52, and Asp54 each coordinate Zn(2+). The Proton donor/acceptor role is filled by His58. Residues His160 and Glu172 each coordinate Zn(2+).

The protein belongs to the Cyclase 1 superfamily. KynB family. Homodimer. Zn(2+) is required as a cofactor.

The enzyme catalyses N-formyl-L-kynurenine + H2O = L-kynurenine + formate + H(+). It participates in amino-acid degradation; L-tryptophan degradation via kynurenine pathway; L-kynurenine from L-tryptophan: step 2/2. Its function is as follows. Catalyzes the hydrolysis of N-formyl-L-kynurenine to L-kynurenine, the second step in the kynurenine pathway of tryptophan degradation. The protein is Kynurenine formamidase of Burkholderia ambifaria (strain MC40-6).